Here is an 853-residue protein sequence, read N- to C-terminus: DNA mismatch repair protein MutS (853 aa).

613–620 (GPNMGGKS) contributes to the ATP binding site.

This sequence belongs to the DNA mismatch repair MutS family.

Functionally, this protein is involved in the repair of mismatches in DNA. It is possible that it carries out the mismatch recognition step. This protein has a weak ATPase activity. In Vibrio vulnificus (strain YJ016), this protein is DNA mismatch repair protein MutS.